The chain runs to 246 residues: Transcription factor MYB13 (246 aa).

2 consecutive HTH myb-type domains span residues 9 to 61 (KIGL…INYL) and 62 to 116 (RPDI…KKRL). 2 consecutive DNA-binding regions (H-T-H motif) follow at residues 37–61 (WRAL…INYL) and 89–112 (WSAI…HTHL).

Expressed in roots and flowers. Expressed in shoot apex, axillary buds, at the basis of flowers and branching points of inflorescences.

The protein resides in the nucleus. Plays a regulatory role in meristem function. Functions as component of a regulatory network controlling the establishment and/or development of the shoot system by the regulation of apical meristem function. May play a role in tolerance to boric acid. The protein is Transcription factor MYB13 of Arabidopsis thaliana (Mouse-ear cress).